We begin with the raw amino-acid sequence, 667 residues long: Coiled-coil domain-containing protein 154 (667 aa).

Coiled coils occupy residues 76 to 182, 215 to 302, 384 to 410, and 457 to 521; these read VVEL…QEAG, RRVD…GQHE, LLRE…SGHL, and LRGV…KEDN.

It is found in the early endosome. This is Coiled-coil domain-containing protein 154 from Homo sapiens (Human).